Reading from the N-terminus, the 268-residue chain is Small ribosomal subunit protein uS2 (268 aa).

Positions 228-268 are disordered; that stretch reads QLDSEQDYEDFDESISDEYDDYEDEEEYEEQDLEVDASEDE. Over residues 231-268 the composition is skewed to acidic residues; the sequence is SEQDYEDFDESISDEYDDYEDEEEYEEQDLEVDASEDE.

This sequence belongs to the universal ribosomal protein uS2 family.

This Rippkaea orientalis (strain PCC 8801 / RF-1) (Cyanothece sp. (strain PCC 8801)) protein is Small ribosomal subunit protein uS2.